Here is a 127-residue protein sequence, read N- to C-terminus: Small ribosomal subunit protein uS11 (127 aa).

It belongs to the universal ribosomal protein uS11 family. As to quaternary structure, part of the 30S ribosomal subunit. Interacts with proteins S7 and S18. Binds to IF-3.

Functionally, located on the platform of the 30S subunit, it bridges several disparate RNA helices of the 16S rRNA. Forms part of the Shine-Dalgarno cleft in the 70S ribosome. The polypeptide is Small ribosomal subunit protein uS11 (Rickettsia prowazekii (strain Madrid E)).